The following is a 291-amino-acid chain: Bis(5'-nucleosyl)-tetraphosphatase, symmetrical (291 aa).

This sequence belongs to the Ap4A hydrolase family.

The catalysed reaction is P(1),P(4)-bis(5'-adenosyl) tetraphosphate + H2O = 2 ADP + 2 H(+). Functionally, hydrolyzes diadenosine 5',5'''-P1,P4-tetraphosphate to yield ADP. In Coxiella burnetii (strain CbuK_Q154) (Coxiella burnetii (strain Q154)), this protein is Bis(5'-nucleosyl)-tetraphosphatase, symmetrical.